We begin with the raw amino-acid sequence, 110 residues long: MASIGQGLVLLLLLLLLTAQPGPLKAQHWSHGWYPGGKRSPDSPQDPQPAPRFPEGYWLGLAAGNPRQSTQSLPSKALAPPEDTVSEEAKTMAWWHLQKQRLIQTLLPRP.

The first 26 residues, 1–26 (MASIGQGLVLLLLLLLLTAQPGPLKA), serve as a signal peptide directing secretion. The segment at 25–85 (KAQHWSHGWY…KALAPPEDTV (61 aa)) is disordered. Glycine 36 is subject to Glycine amide.

It belongs to the GnRH family. As to expression, midbrain.

Its subcellular location is the secreted. Functionally, stimulates the secretion of gonadotropins; it stimulates the secretion of both luteinizing and follicle-stimulating hormones. This is Progonadoliberin-2 (GNRH2) from Suncus murinus (Asian house shrew).